A 270-amino-acid polypeptide reads, in one-letter code: Carboxy-S-adenosyl-L-methionine synthase (270 aa).

S-adenosyl-L-methionine contacts are provided by residues tyrosine 65, 90–92, 143–144, asparagine 158, and arginine 225; these read GCS and DI.

It belongs to the class I-like SAM-binding methyltransferase superfamily. Cx-SAM synthase family. In terms of assembly, homodimer.

It carries out the reaction prephenate + S-adenosyl-L-methionine = carboxy-S-adenosyl-L-methionine + 3-phenylpyruvate + H2O. Its function is as follows. Catalyzes the conversion of S-adenosyl-L-methionine (SAM) to carboxy-S-adenosyl-L-methionine (Cx-SAM). In Chromohalobacter salexigens (strain ATCC BAA-138 / DSM 3043 / CIP 106854 / NCIMB 13768 / 1H11), this protein is Carboxy-S-adenosyl-L-methionine synthase.